The primary structure comprises 148 residues: uncharacterized protein (148 aa).

Positions 1-20 (MNLTKLLPAFAAAVVLSACA) are cleaved as a signal peptide.

This is an uncharacterized protein from Haemophilus influenzae (strain ATCC 51907 / DSM 11121 / KW20 / Rd).